A 454-amino-acid chain; its full sequence is COBRA-like protein 6 (454 aa).

The signal sequence occupies residues 1 to 24; sequence MGAMLNLLLVVTVILCSILSPTRF. N-linked (GlcNAc...) asparagine glycans are attached at residues N104, N191, N320, N355, and N391. The GPI-anchor amidated serine moiety is linked to residue S429. A propeptide spans 430–454 (removed in mature form); sequence SSSSAVISSVSVVFCFLLHHLLLLV.

It belongs to the COBRA family. In terms of tissue distribution, expressed in flowers and siliques.

Its subcellular location is the cell membrane. In Arabidopsis thaliana (Mouse-ear cress), this protein is COBRA-like protein 6 (COBL6).